The primary structure comprises 268 residues: Phosphatidylglycerol--prolipoprotein diacylglyceryl transferase (268 aa).

A run of 7 helical transmembrane segments spans residues 27-47 (PALRWYGFTYLVGFVAAMWLL), 66-86 (LLFYGFLGVILGGRIGYVLFY), 104-124 (GGMSFHGGLMGVITAMIYIAW), 130-150 (FFAVADMVAPVVPIGLGAGRI), 181-201 (PSQLYQFALEGVALFLLLYWF), 208-228 (VGAVSGMFLLGYGIFRVIVET), and 242-262 (FMTMGQILSVPMILFGLYLIL). Arg149 is an a 1,2-diacyl-sn-glycero-3-phospho-(1'-sn-glycerol) binding site.

It belongs to the Lgt family.

It localises to the cell inner membrane. It catalyses the reaction L-cysteinyl-[prolipoprotein] + a 1,2-diacyl-sn-glycero-3-phospho-(1'-sn-glycerol) = an S-1,2-diacyl-sn-glyceryl-L-cysteinyl-[prolipoprotein] + sn-glycerol 1-phosphate + H(+). The protein operates within protein modification; lipoprotein biosynthesis (diacylglyceryl transfer). Functionally, catalyzes the transfer of the diacylglyceryl group from phosphatidylglycerol to the sulfhydryl group of the N-terminal cysteine of a prolipoprotein, the first step in the formation of mature lipoproteins. This chain is Phosphatidylglycerol--prolipoprotein diacylglyceryl transferase, found in Shewanella sp. (strain ANA-3).